Here is a 323-residue protein sequence, read N- to C-terminus: MSNLKQLRTRIKSVKSTQKITKAMQLVSASKMAKIKSQIANSNFYIEAVSKMMSAILSIDMYELSIEEQKFFNTVPNKANLLIVMTSQRGLCGTFNYSIIKQVKNDIKELENKGEQIKLIIIGKKGYEALKRQYVNYIDSYFELPKIHDENLMLQVKQKIMSAVENLEVSNCVIYFNKFKNAMTQIMTRQQILPVAKYQDDSMIDNPIVNLVGFGYKERGVKPINNRRATSDIVGESKSIDYNYEYEGESLISNLINLYVNSQINYALLQSRASEEGARMTAMENATNNANDLISKLVLKLNRSRQAIITTELIEIIAGSEVV.

An insert region spans residues 206–240 (NPIVNLVGFGYKERGVKPINNRRATSDIVGESKSI).

Belongs to the ATPase gamma chain family. In terms of assembly, F-type ATPases have 2 components, CF(1) - the catalytic core - and CF(0) - the membrane proton channel. CF(1) has five subunits: alpha(3), beta(3), gamma(1), delta(1), epsilon(1). CF(0) has three main subunits: a, b and c.

The protein localises to the cell inner membrane. Produces ATP from ADP in the presence of a proton gradient across the membrane. The gamma chain is believed to be important in regulating ATPase activity and the flow of protons through the CF(0) complex. The sequence is that of ATP synthase gamma chain from Rickettsia conorii (strain ATCC VR-613 / Malish 7).